The primary structure comprises 491 residues: Cysteine--tRNA ligase (491 aa).

Cys-31 is a Zn(2+) binding site. The 'HIGH' region signature appears at 33 to 43 (PTVYGDAHLGH). Positions 226, 251, and 255 each coordinate Zn(2+). The short motif at 283 to 287 (KMGKS) is the 'KMSKS' region element. Lys-286 contacts ATP.

It belongs to the class-I aminoacyl-tRNA synthetase family. In terms of assembly, monomer. Zn(2+) is required as a cofactor.

It localises to the cytoplasm. It catalyses the reaction tRNA(Cys) + L-cysteine + ATP = L-cysteinyl-tRNA(Cys) + AMP + diphosphate. This Bacteroides fragilis (strain ATCC 25285 / DSM 2151 / CCUG 4856 / JCM 11019 / LMG 10263 / NCTC 9343 / Onslow / VPI 2553 / EN-2) protein is Cysteine--tRNA ligase.